Reading from the N-terminus, the 875-residue chain is Translation initiation factor IF-2 (875 aa).

3 disordered regions span residues Met1 to Ala20, Leu47 to Ala102, and Glu126 to Gly246. A compositionally biased stretch (low complexity) spans Ala54 to Pro66. The span at Ala67–Ser85 shows a compositional bias: pro residues. Composition is skewed to basic and acidic residues over residues Arg88–Ala102 and Glu126–Ala140. 2 stretches are compositionally biased toward low complexity: residues Glu141–Pro195 and Pro202–Pro221. Basic and acidic residues predominate over residues Lys223 to Gly246. Residues Ala374–Lys544 form the tr-type G domain. Positions Gly383–Thr390 are G1. Gly383–Thr390 is a binding site for GTP. The segment at Gly408–His412 is G2. Residues Asp430–Gly433 are G3. Residues Asp430–His434 and Thr484–Asp487 contribute to the GTP site. The segment at Thr484–Asp487 is G4. The interval Ser520–Lys522 is G5.

Belongs to the TRAFAC class translation factor GTPase superfamily. Classic translation factor GTPase family. IF-2 subfamily.

The protein resides in the cytoplasm. Its function is as follows. One of the essential components for the initiation of protein synthesis. Protects formylmethionyl-tRNA from spontaneous hydrolysis and promotes its binding to the 30S ribosomal subunits. Also involved in the hydrolysis of GTP during the formation of the 70S ribosomal complex. The sequence is that of Translation initiation factor IF-2 from Novosphingobium aromaticivorans (strain ATCC 700278 / DSM 12444 / CCUG 56034 / CIP 105152 / NBRC 16084 / F199).